The following is a 193-amino-acid chain: 21 kDa protein (193 aa).

An N-terminal signal peptide occupies residues 1-22 (MKLSKSTLVFSALLVILAAASA).

This chain is 21 kDa protein, found in Daucus carota (Wild carrot).